The following is a 1100-amino-acid chain: ATP-dependent DNA helicase mph1 (1100 aa).

Positions 1 to 21 are enriched in acidic residues; it reads MSDSDDYLQDDPDDQAFDDFA. The interval 1 to 250 is disordered; it reads MSDSDDYLQD…RPSSFMQSSN (250 aa). The segment covering 38-61 has biased composition (low complexity); that stretch reads RNQTRNTTSRRNEDNSVASDSDSF. Basic and acidic residues predominate over residues 84 to 94; that stretch reads FADHPENEASS. The span at 104-117 shows a compositional bias: polar residues; sequence NNPQENIFVTQLTQ. A compositionally biased stretch (pro residues) spans 135-146; that stretch reads PPPPPPPAPTKP. Polar residues-rich tracts occupy residues 182–191 and 200–209; these read RLSFSTAQNS and NAPTNTAQTE. The span at 212–223 shows a compositional bias: acidic residues; that stretch reads DFLDDIPDDAFD. Low complexity predominate over residues 237–249; that stretch reads SNSSRPSSFMQSS. The Helicase ATP-binding domain occupies 317–485; sequence ITQKGLFHNL…AVIDGLEISK (169 aa). 330–337 provides a ligand contact to ATP; the sequence is LPTGLGKT. A DEAH box motif is present at residues 433–436; the sequence is DEAH. A Helicase C-terminal domain is found at 655 to 829; sequence YLKQVVLNHF…GTRFTFHDDK (175 aa). Disordered regions lie at residues 850–913 and 1003–1100; these read PEEN…PEPV and RRPA…LGRR. Basic residues-rich tracts occupy residues 863–875 and 1019–1028; these read RRGRVPKKPPKKF and GNKKRLRKGR. Over residues 1053–1066 the composition is skewed to polar residues; the sequence is QPISPEQLLSSFTD. The segment covering 1082–1092 has biased composition (acidic residues); the sequence is LELDADFEAPD.

The protein belongs to the DEAD box helicase family. DEAH subfamily. FANCM sub-subfamily. In terms of assembly, interacts with the MHF histone-fold complex to form the FANCM-MHF complex.

The protein resides in the nucleus. The catalysed reaction is ATP + H2O = ADP + phosphate + H(+). Functionally, ATP-dependent DNA helicase involved in DNA damage repair by homologous recombination and in genome maintenance. Capable of unwinding D-loops. Plays a role in limiting crossover recombinants during mitotic DNA double-strand break (DSB) repair. Component of a FANCM-MHF complex which promotes gene conversion at blocked replication forks, probably by reversal of the stalled fork. The chain is ATP-dependent DNA helicase mph1 from Aspergillus terreus (strain NIH 2624 / FGSC A1156).